The following is a 482-amino-acid chain: Catalase (482 aa).

Active-site residues include His-53 and Asn-126. Position 336 (Tyr-336) interacts with heme.

The protein belongs to the catalase family. The cofactor is heme.

It localises to the periplasm. It catalyses the reaction 2 H2O2 = O2 + 2 H2O. Functionally, decomposes hydrogen peroxide into water and oxygen; serves to protect cells from the toxic effects of hydrogen peroxide. Could protect cells in nodules which have a high potential to produce hydrogen peroxide because of the strong reducing conditions required for nitrogen fixation and the action of several proteins. The chain is Catalase (katA) from Aliivibrio fischeri (strain ATCC 700601 / ES114) (Vibrio fischeri).